The following is a 508-amino-acid chain: MKSVTPVLLLILDGFGHRLDGDDNAIALARTPNWDRLRRDHPYGTIDASERAVGLPRGQFGNSEVGHLNIGAGRIVTQDISRIDLDLEEQRFAGNPAFTHAFAAARGHALHILGLLSDGGVHSHENHIHALIRAAQAAGVADIRVHAFLDGRDTPPRSARTYLERLDAVLAECPNARLATVCGRYFAMDRDKRWERVEQAYRLIVDGEAAFQADDGLSALAAAYARDENDEFVRATRIGAPAPMQDGDAVIFMNFRADRARELTSALTDPEFDGFSARQLRLSDYVTLTRYGADYASLSIAYPPQTIRNGFGEYLASQGLRQLRIAETEKYPHVTYFFNGGEETVYPGEDRILVPSPKVATYDLQPEMSAEEVTNRIVEAINSRQYQAIICNYANGDMVGHTGNLPAAIRAVETLDGCINRCVEAMLANGGEVLITADHGNCEQMDDPLHQQPHTQHTTNLVPLCYVGHRPARILEGGALKDIAPTLLALMGLPAPDDMTGHSLVELL.

2 residues coordinate Mn(2+): aspartate 13 and serine 63. Residue serine 63 is the Phosphoserine intermediate of the active site. Substrate-binding positions include histidine 122, 152–153, arginine 184, arginine 190, 256–259, and lysine 330; these read RD and RADR. Mn(2+) is bound by residues aspartate 397, histidine 401, aspartate 438, histidine 439, and histidine 457.

This sequence belongs to the BPG-independent phosphoglycerate mutase family. Monomer. It depends on Mn(2+) as a cofactor.

It catalyses the reaction (2R)-2-phosphoglycerate = (2R)-3-phosphoglycerate. Its pathway is carbohydrate degradation; glycolysis; pyruvate from D-glyceraldehyde 3-phosphate: step 3/5. Catalyzes the interconversion of 2-phosphoglycerate and 3-phosphoglycerate. In Laribacter hongkongensis (strain HLHK9), this protein is 2,3-bisphosphoglycerate-independent phosphoglycerate mutase.